The following is a 287-amino-acid chain: Phospholipid phosphatase 2 (287 aa).

Residues 1–4 (MERR) are Cytoplasmic-facing. A helical transmembrane segment spans residues 5-25 (WVFVLLDVLCVLVAALPCAIL). At 26-51 (TFVNTPYKRGFYCGDDSIRYPYRPDT) the chain is on the lumenal side. The helical transmembrane segment at 52–72 (ITHGLMAGVIITATVILVSAG) threads the bilayer. Over 73 to 87 (EAYLVYTDRLYSRSD) the chain is Cytoplasmic. Residues 88–108 (FNNYLAALYKVVGTFLFGAAV) traverse the membrane as a helical segment. Over 109 to 161 (SQSLTDLAKYMTGRLRPNFLAVCDPDWSRVNCSAYVQVEVCRGSSANVTESRL) the chain is Lumenal. The segment at 117 to 125 (KYMTGRLRP) is phosphatase sequence motif I. Residues N139 and N155 are each glycosylated (N-linked (GlcNAc...) asparagine). The helical transmembrane segment at 162–182 (SFYSGHSSFGMYCMVFLALYV) threads the bilayer. Positions 164–167 (YSGH) are phosphatase sequence motif II. H167 acts as the Proton donors in catalysis. Residues 183-193 (QARLCWKWARL) are Cytoplasmic-facing. A helical transmembrane segment spans residues 194 to 211 (LRPTVQFFLVAFALYVGY). The Lumenal segment spans residues 212–218 (TRVSDHK). The segment at 212-223 (TRVSDHKHHWSD) is phosphatase sequence motif III. H219 acts as the Nucleophile in catalysis. Residues 219-239 (HHWSDVLVGLLQGALVASLTV) form a helical membrane-spanning segment. Residues 240–287 (RYISDFFKARPPQHCPEEEDLERKPSLSLTLALGETDCNHYGYPVSSS) are Cytoplasmic-facing.

It belongs to the PA-phosphatase related phosphoesterase family. As to quaternary structure, forms functional homodimers and homooligomers. Can also form heterooligomers with PLPP1 and PLPP3. N-glycosylated.

The protein resides in the membrane. It is found in the cell membrane. The protein localises to the early endosome membrane. It localises to the endoplasmic reticulum membrane. It carries out the reaction a 1,2-diacyl-sn-glycero-3-phosphate + H2O = a 1,2-diacyl-sn-glycerol + phosphate. It catalyses the reaction 1,2-dihexadecanoyl-sn-glycero-3-phosphate + H2O = 1,2-dihexadecanoyl-sn-glycerol + phosphate. The enzyme catalyses 1,2-di-(9Z-octadecenoyl)-sn-glycero-3-phosphate + H2O = 1,2-di-(9Z-octadecenoyl)-sn-glycerol + phosphate. The catalysed reaction is a monoacyl-sn-glycero-3-phosphate + H2O = a monoacylglycerol + phosphate. It carries out the reaction (9Z)-octadecenoyl-sn-glycero-3-phosphate + H2O = (9Z-octadecenoyl)-glycerol + phosphate. It catalyses the reaction sphing-4-enine 1-phosphate + H2O = sphing-4-enine + phosphate. The enzyme catalyses an N-acylsphing-4-enine 1-phosphate + H2O = an N-acylsphing-4-enine + phosphate. The catalysed reaction is N-(octanoyl)-sphing-4-enine-1-phosphate + H2O = N-octanoylsphing-4-enine + phosphate. It carries out the reaction N-(9Z-octadecenoyl)-ethanolamine phosphate + H2O = N-(9Z-octadecenoyl) ethanolamine + phosphate. Its pathway is lipid metabolism; phospholipid metabolism. Magnesium-independent phospholipid phosphatase. Insensitive to N-ethylmaleimide. Its function is as follows. Magnesium-independent phospholipid phosphatase that catalyzes the dephosphorylation of a variety of glycerolipid and sphingolipid phosphate esters including phosphatidate/PA, lysophosphatidate/LPA, sphingosine 1-phosphate/S1P and ceramide 1-phosphate/C1P. Has no apparent extracellular phosphatase activity and therefore most probably acts intracellularly. Also acts on N-oleoyl ethanolamine phosphate/N-(9Z-octadecenoyl)-ethanolamine phosphate, a potential physiological compound. Through dephosphorylation of these bioactive lipid mediators produces new bioactive compounds and may regulate signal transduction in different cellular processes. Indirectly regulates, for instance, cell cycle G1/S phase transition through its phospholipid phosphatase activity. This chain is Phospholipid phosphatase 2, found in Bos taurus (Bovine).